Here is a 445-residue protein sequence, read N- to C-terminus: UDP-N-acetylmuramate--L-alanine ligase (445 aa).

113–119 (GSHGKTS) provides a ligand contact to ATP.

The protein belongs to the MurCDEF family.

It localises to the cytoplasm. It carries out the reaction UDP-N-acetyl-alpha-D-muramate + L-alanine + ATP = UDP-N-acetyl-alpha-D-muramoyl-L-alanine + ADP + phosphate + H(+). It functions in the pathway cell wall biogenesis; peptidoglycan biosynthesis. In terms of biological role, cell wall formation. This is UDP-N-acetylmuramate--L-alanine ligase from Enterococcus faecalis (strain ATCC 700802 / V583).